The sequence spans 184 residues: Tumor necrosis factor alpha-induced protein 8-like protein 2 (184 aa).

Ser3 bears the Phosphoserine mark.

This sequence belongs to the TNFAIP8 family. TNFAIP8L2 subfamily. May interact with CASP8; however, such result is unclear since could not reproduce the interaction with CASP8. Interacts with RAC1. In terms of processing, phosphorylated by TAK1/MAP3K7; this phosphorylation triggers association with BTRC and subsequent ubiquitination and degradation. Ubiquitinated in a BTRC-depdent manner; leading to degradation mediated through the proteasome pathway.

The protein localises to the cytoplasm. It localises to the nucleus. Its subcellular location is the lysosome. In terms of biological role, acts as a negative regulator of innate and adaptive immunity by maintaining immune homeostasis. Plays a regulatory role in the Toll-like signaling pathway by determining the strength of LPS-induced signaling and gene expression. Inhibits TCR-mediated T-cell activation and negatively regulate T-cell function to prevent hyperresponsiveness. Also inhibits autolysosome formation via negatively modulating MTOR activation by interacting with RAC1 and promoting the disassociation of the RAC1-MTOR complex. Plays an essential role in NK-cell biology by acting as a checkpoint and displaying an expression pattern correlating with NK-cell maturation process and by negatively regulating NK-cell maturation and antitumor immunity. Mechanistically, suppresses IL-15-triggered mTOR activity in NK-cells. The sequence is that of Tumor necrosis factor alpha-induced protein 8-like protein 2 (TNFAIP8L2) from Oryctolagus cuniculus (Rabbit).